The primary structure comprises 510 residues: NAD(P)H-quinone oxidoreductase subunit 2 A, chloroplastic (510 aa).

The next 12 helical transmembrane spans lie at 24-44, 59-79, 99-119, 124-144, 149-169, 183-203, 229-249, 295-315, 323-343, 354-374, 395-415, and 418-438; these read LLLF…GLIL, WFYF…LFRW, IFQF…VEYI, MAIT…MFLC, LITI…LSGY, YLLM…WLYG, ISLA…PAPF, WHLL…LLAI, MLAY…IVGD, YMLF…LFGL, ALSL…AGFF, and LYLF…IGLL.

The protein belongs to the complex I subunit 2 family. NDH is composed of at least 16 different subunits, 5 of which are encoded in the nucleus.

The protein resides in the plastid. It is found in the chloroplast thylakoid membrane. It catalyses the reaction a plastoquinone + NADH + (n+1) H(+)(in) = a plastoquinol + NAD(+) + n H(+)(out). It carries out the reaction a plastoquinone + NADPH + (n+1) H(+)(in) = a plastoquinol + NADP(+) + n H(+)(out). Its function is as follows. NDH shuttles electrons from NAD(P)H:plastoquinone, via FMN and iron-sulfur (Fe-S) centers, to quinones in the photosynthetic chain and possibly in a chloroplast respiratory chain. The immediate electron acceptor for the enzyme in this species is believed to be plastoquinone. Couples the redox reaction to proton translocation, and thus conserves the redox energy in a proton gradient. The sequence is that of NAD(P)H-quinone oxidoreductase subunit 2 A, chloroplastic from Triticum aestivum (Wheat).